We begin with the raw amino-acid sequence, 452 residues long: tRNA modification GTPase MnmE (452 aa).

(6S)-5-formyl-5,6,7,8-tetrahydrofolate is bound by residues Arg21, Glu82, and Arg121. A TrmE-type G domain is found at 214–372 (GARVVLVGRP…LAKTIATTLL (159 aa)). Asn224 lines the K(+) pocket. Residues 224-229 (NVGKSS), 243-249 (TPIPGTT), 268-271 (DTAG), and 353-355 (SAR) each bind GTP. Ser228 contributes to the Mg(2+) binding site. K(+) contacts are provided by Thr243, Ile245, and Thr248. Thr249 provides a ligand contact to Mg(2+). Lys452 is a (6S)-5-formyl-5,6,7,8-tetrahydrofolate binding site.

This sequence belongs to the TRAFAC class TrmE-Era-EngA-EngB-Septin-like GTPase superfamily. TrmE GTPase family. As to quaternary structure, homodimer. Heterotetramer of two MnmE and two MnmG subunits. K(+) serves as cofactor.

It is found in the cytoplasm. Its function is as follows. Exhibits a very high intrinsic GTPase hydrolysis rate. Involved in the addition of a carboxymethylaminomethyl (cmnm) group at the wobble position (U34) of certain tRNAs, forming tRNA-cmnm(5)s(2)U34. The polypeptide is tRNA modification GTPase MnmE (Chloroflexus aurantiacus (strain ATCC 29366 / DSM 635 / J-10-fl)).